A 189-amino-acid polypeptide reads, in one-letter code: Peptide deformylase (189 aa).

2 residues coordinate Fe cation: Cys-116 and His-159. The active site involves Glu-160. Residue His-163 coordinates Fe cation.

This sequence belongs to the polypeptide deformylase family. Fe(2+) serves as cofactor.

The enzyme catalyses N-terminal N-formyl-L-methionyl-[peptide] + H2O = N-terminal L-methionyl-[peptide] + formate. Functionally, removes the formyl group from the N-terminal Met of newly synthesized proteins. Requires at least a dipeptide for an efficient rate of reaction. N-terminal L-methionine is a prerequisite for activity but the enzyme has broad specificity at other positions. This chain is Peptide deformylase, found in Limosilactobacillus fermentum (strain NBRC 3956 / LMG 18251) (Lactobacillus fermentum).